We begin with the raw amino-acid sequence, 572 residues long: O-fucosyltransferase 16 (572 aa).

The helical; Signal-anchor for type II membrane protein transmembrane segment at Leu17–Phe37 threads the bilayer. 2 N-linked (GlcNAc...) asparagine glycosylation sites follow: Asn92 and Asn136. His274 to Arg276 provides a ligand contact to substrate. N-linked (GlcNAc...) asparagine glycans are attached at residues Asn446 and Asn506. The interval Glu498 to Asp572 is disordered. Acidic residues predominate over residues Asp521 to Asp541. N-linked (GlcNAc...) asparagine glycosylation is present at Asn549. The span at Asp554 to Leu566 shows a compositional bias: acidic residues.

The protein belongs to the glycosyltransferase GT106 family.

It is found in the membrane. It participates in glycan metabolism. The sequence is that of O-fucosyltransferase 16 from Arabidopsis thaliana (Mouse-ear cress).